An 886-amino-acid polypeptide reads, in one-letter code: MTASPHPAADMLPKSWDPAAMESAIYQKWLDAGYFTADPTSTKPAYSIVLPPPNVTGSLHMGHALEHTMMDALTRRKRMQGYEVLWQPGTDHAGIATQSVVEQQLAVDGKTKEDLGRELFVDKVWDWKRESGGAIGGQMRRLGDGVDWSRDRFTMDEGLSRAVRTIFKRLYDAGLIYRAERLVNWSPVLQTAISDLEVNYRDVEGELVSFRYGSLDDSQPHIVVATTRVETMLGDTAIAVHPDDERYRHLVGTSLAHPFVDRELAIVADEHVDPEFGTGAVKVTPAHDPNDFEIGVRHQLPMPSILDTKGRIVDTGTRFDGMDRFEARVAVRQALAAQGRVVEEKRPYLHSVGHSERSGEPIEPRLSLQWWVRVESLAKAAGDAVRNGDTVIHPASMEPRWFSWVDDMHDWCISRQLWWGHRIPIWYGPDGEQVCVGPDETPPQGWEQDPDVLDTWFSSALWPFSTLGWPDKTAELEKFYPTSVLVTGYDILFFWVARMMMFGTFVGDDAAITLDGRRGPQVPFTDVFLHGLIRDESGRKMSKSKGNVIDPLDWVEMFGADALRFTLARGASPGGDLAVSEDAVRASRNFGTKLFNATRYALLNGAAPAPLPSPNELTDADRWILGRLEEVRAEVDSAFDGYEFSRACESLYHFAWDEFCDWYLELAKTQLAQGLTHTTAVLAAGLDTLLRLLHPVIPFLTEALWLALTGRESLVSADWPEPSGISVDLVAAQRINDMQKLVTEVRRFRSDQGLADRQKVPARMHGVRDSDLSNQVAAVTSLAWLTEPGPDFEPSVSLEVRLGPEMNRTVVVELDTSGTIDVAAERRRLEKELAGAQKELASTAAKLANADFLAKAPDAVIAKIRDRQRVAQQETERITTRLAALQ.

Residues proline 53–histidine 63 carry the 'HIGH' region motif. The short motif at lysine 540–serine 544 is the 'KMSKS' region element. Lysine 543 is an ATP binding site. Residues threonine 819–aspartate 851 adopt a coiled-coil conformation.

It belongs to the class-I aminoacyl-tRNA synthetase family. ValS type 1 subfamily. Monomer.

It localises to the cytoplasm. The catalysed reaction is tRNA(Val) + L-valine + ATP = L-valyl-tRNA(Val) + AMP + diphosphate. Catalyzes the attachment of valine to tRNA(Val). As ValRS can inadvertently accommodate and process structurally similar amino acids such as threonine, to avoid such errors, it has a 'posttransfer' editing activity that hydrolyzes mischarged Thr-tRNA(Val) in a tRNA-dependent manner. The protein is Valine--tRNA ligase of Mycobacterium tuberculosis (strain CDC 1551 / Oshkosh).